Consider the following 311-residue polypeptide: Pyrimidine-specific ribonucleoside hydrolase RihA (311 aa).

Residue H240 is part of the active site.

Belongs to the IUNH family. RihA subfamily.

Functionally, hydrolyzes cytidine or uridine to ribose and cytosine or uracil, respectively. In Klebsiella pneumoniae (strain 342), this protein is Pyrimidine-specific ribonucleoside hydrolase RihA.